A 101-amino-acid chain; its full sequence is Large ribosomal subunit protein uL24 (101 aa).

This sequence belongs to the universal ribosomal protein uL24 family. Part of the 50S ribosomal subunit.

Its function is as follows. One of two assembly initiator proteins, it binds directly to the 5'-end of the 23S rRNA, where it nucleates assembly of the 50S subunit. One of the proteins that surrounds the polypeptide exit tunnel on the outside of the subunit. The chain is Large ribosomal subunit protein uL24 from Streptococcus pneumoniae (strain ATCC 700669 / Spain 23F-1).